Here is a 640-residue protein sequence, read N- to C-terminus: GATA zinc finger domain-containing protein 12 (640 aa).

2 disordered regions span residues 121-209 and 355-390; these read SNNI…NIPI and QQIRLQQQQSQQQHQQHQQHQQHQQPPTNIPQHINN. Composition is skewed to low complexity over residues 122–209 and 355–379; these read NNIP…NIPI and QQIRLQQQQSQQQHQQHQQHQQHQQ. The span at 380–390 shows a compositional bias: polar residues; that stretch reads PPTNIPQHINN. A GATA-type zinc finger spans residues 506-531; that stretch reads CVNCKTSDTPEWRRGPQGAKTLCNAC.

The protein is GATA zinc finger domain-containing protein 12 (gtaL) of Dictyostelium discoideum (Social amoeba).